The following is a 360-amino-acid chain: Phosphoserine aminotransferase (360 aa).

An L-glutamate-binding site is contributed by Arg42. Pyridoxal 5'-phosphate is bound by residues 76 to 77 (AS), Trp102, Thr152, Asp172, and Gln195. An N6-(pyridoxal phosphate)lysine modification is found at Lys196. 237-238 (NT) provides a ligand contact to pyridoxal 5'-phosphate.

This sequence belongs to the class-V pyridoxal-phosphate-dependent aminotransferase family. SerC subfamily. In terms of assembly, homodimer. The cofactor is pyridoxal 5'-phosphate.

It is found in the cytoplasm. It carries out the reaction O-phospho-L-serine + 2-oxoglutarate = 3-phosphooxypyruvate + L-glutamate. The enzyme catalyses 4-(phosphooxy)-L-threonine + 2-oxoglutarate = (R)-3-hydroxy-2-oxo-4-phosphooxybutanoate + L-glutamate. The protein operates within amino-acid biosynthesis; L-serine biosynthesis; L-serine from 3-phospho-D-glycerate: step 2/3. Catalyzes the reversible conversion of 3-phosphohydroxypyruvate to phosphoserine and of 3-hydroxy-2-oxo-4-phosphonooxybutanoate to phosphohydroxythreonine. The protein is Phosphoserine aminotransferase of Bacillus cereus (strain ZK / E33L).